We begin with the raw amino-acid sequence, 67 residues long: Large ribosomal subunit protein bL35 (67 aa).

Residues 22-45 (GKIKRWKSGGAHYNTKKSSKRKRH) form a disordered region. Residues 35–45 (NTKKSSKRKRH) are compositionally biased toward basic residues.

The protein belongs to the bacterial ribosomal protein bL35 family.

In Aquifex aeolicus (strain VF5), this protein is Large ribosomal subunit protein bL35.